The primary structure comprises 93 residues: Neutrophil cationic peptide 2 (93 aa).

The first 19 residues, 1–19 (MRTVPLFAACLLLTLMAQA), serve as a signal peptide directing secretion. A propeptide spanning residues 20–62 (EPLPRAADHSDTKMKGDREDHVAVISFWEEESTSLQDAGAGAG) is cleaved from the precursor. 3 disulfide bridges follow: Cys-65–Cys-93, Cys-67–Cys-82, and Cys-72–Cys-92.

This sequence belongs to the alpha-defensin family.

Its subcellular location is the secreted. In terms of biological role, has antibiotic, anti-fungi and antiviral activity. The chain is Neutrophil cationic peptide 2 from Cavia porcellus (Guinea pig).